The sequence spans 376 residues: 4-hydroxy-3-methylbut-2-en-1-yl diphosphate synthase (flavodoxin) (376 aa).

Cys270, Cys273, Cys305, and Glu312 together coordinate [4Fe-4S] cluster.

Belongs to the IspG family. [4Fe-4S] cluster is required as a cofactor.

It catalyses the reaction (2E)-4-hydroxy-3-methylbut-2-enyl diphosphate + oxidized [flavodoxin] + H2O + 2 H(+) = 2-C-methyl-D-erythritol 2,4-cyclic diphosphate + reduced [flavodoxin]. The protein operates within isoprenoid biosynthesis; isopentenyl diphosphate biosynthesis via DXP pathway; isopentenyl diphosphate from 1-deoxy-D-xylulose 5-phosphate: step 5/6. Converts 2C-methyl-D-erythritol 2,4-cyclodiphosphate (ME-2,4cPP) into 1-hydroxy-2-methyl-2-(E)-butenyl 4-diphosphate. The sequence is that of 4-hydroxy-3-methylbut-2-en-1-yl diphosphate synthase (flavodoxin) from Colwellia psychrerythraea (strain 34H / ATCC BAA-681) (Vibrio psychroerythus).